We begin with the raw amino-acid sequence, 178 residues long: Cytochrome b6-f complex iron-sulfur subunit (178 aa).

Residues 20–42 (LLTFGTATGVALGALYPVANYFM) form a helical membrane-spanning segment. The 97-residue stretch at 65–161 (KTGWLASHQA…VDVDDDAVLV (97 aa)) folds into the Rieske domain. Positions 107, 109, 125, and 128 each coordinate [2Fe-2S] cluster. An intrachain disulfide couples cysteine 112 to cysteine 127.

Belongs to the Rieske iron-sulfur protein family. In terms of assembly, the 4 large subunits of the cytochrome b6-f complex are cytochrome b6, subunit IV (17 kDa polypeptide, PetD), cytochrome f and the Rieske protein, while the 4 small subunits are PetG, PetL, PetM and PetN. The complex functions as a dimer. [2Fe-2S] cluster is required as a cofactor.

The protein localises to the cellular thylakoid membrane. The catalysed reaction is 2 oxidized [plastocyanin] + a plastoquinol + 2 H(+)(in) = 2 reduced [plastocyanin] + a plastoquinone + 4 H(+)(out). Functionally, component of the cytochrome b6-f complex, which mediates electron transfer between photosystem II (PSII) and photosystem I (PSI), cyclic electron flow around PSI, and state transitions. This chain is Cytochrome b6-f complex iron-sulfur subunit, found in Prochlorococcus marinus subsp. pastoris (strain CCMP1986 / NIES-2087 / MED4).